The sequence spans 54 residues: uncharacterized protein (54 aa).

A compositionally biased stretch (basic and acidic residues) spans 23–35 (DVMQEGETAKELN). Residues 23–54 (DVMQEGETAKELNYEGEDMQATSSAQNRQTSV) form a disordered region. Positions 42–54 (QATSSAQNRQTSV) are enriched in polar residues.

This is an uncharacterized protein from Bacillus subtilis (strain 168).